The chain runs to 317 residues: D-alanine--D-alanine ligase (317 aa).

An ATP-grasp domain is found at 103 to 299 (KHIFHSLNID…FNELVKIIVE (197 aa)). 130–183 (KVDYPYVLKPINEGSSIGVHMIFSHEDYLELKNNSSTIMEKMIIEEYIPGIELH) is an ATP binding site. D251, E265, and N267 together coordinate Mg(2+).

The protein belongs to the D-alanine--D-alanine ligase family. Requires Mg(2+) as cofactor. Mn(2+) serves as cofactor.

Its subcellular location is the cytoplasm. It catalyses the reaction 2 D-alanine + ATP = D-alanyl-D-alanine + ADP + phosphate + H(+). The protein operates within cell wall biogenesis; peptidoglycan biosynthesis. Functionally, cell wall formation. The protein is D-alanine--D-alanine ligase of Wolbachia pipientis subsp. Culex pipiens (strain wPip).